The chain runs to 66 residues: Large ribosomal subunit protein bL33c (66 aa).

It belongs to the bacterial ribosomal protein bL33 family.

The protein localises to the plastid. It localises to the chloroplast. The chain is Large ribosomal subunit protein bL33c from Arabis hirsuta (Hairy rock-cress).